The sequence spans 449 residues: Glucose-6-phosphate isomerase (449 aa).

The active-site Proton donor is the Glu291. Catalysis depends on residues His312 and Lys426.

It belongs to the GPI family.

It localises to the cytoplasm. The enzyme catalyses alpha-D-glucose 6-phosphate = beta-D-fructose 6-phosphate. The protein operates within carbohydrate biosynthesis; gluconeogenesis. Its pathway is carbohydrate degradation; glycolysis; D-glyceraldehyde 3-phosphate and glycerone phosphate from D-glucose: step 2/4. In terms of biological role, catalyzes the reversible isomerization of glucose-6-phosphate to fructose-6-phosphate. The chain is Glucose-6-phosphate isomerase from Streptococcus pneumoniae serotype 4 (strain ATCC BAA-334 / TIGR4).